Consider the following 137-residue polypeptide: Sch210972 biosynthesis cluster protein E (137 aa).

Positions 1-12 (MTKYTSVNSSLP) are enriched in polar residues. The disordered stretch occupies residues 1–137 (MTKYTSVNSS…ASTIRPPCCG (137 aa)). Over residues 15-27 (PRQTTPTRPATQT) the composition is skewed to low complexity. The span at 51-71 (GSLNGSPTLRTTLDTSLSGTR) shows a compositional bias: polar residues. Positions 94–109 (DEDHPHDPGPDSDAKK) are enriched in basic and acidic residues.

It participates in secondary metabolite biosynthesis. Functionally, part of the gene cluster that mediates the biosynthesis of the tetramic acid Sch210972, a potential anti-HIV fungal natural product that contains a decalin core. The PKS module of cghG together with the enoylreductase cghC catalyze the formation of the polyketide unit which is then conjugated to 4-hydroxyl-4-methyl glutamate (HMG) by the condensation domain of the cghG NRPS module. One unique structural feature of Sch210972 is the tetramic acid motif proposed to be derived from the non-proteinogenic amino acid HMG, by a Dieckmann-type condensation catalyzed by the reductase domain of cghG. The aldolase cghB catalyzes the aldol condensation of 2 molecules of pyruvic acid to yield the intermediate 4-hydroxyl-4-methyl-2-oxoglutarate (HMOG), which can then be stereoselectively transaminated by an unidentified enzyme to form HMG. The Diels-Alderase cghA then uses the Dieckmann product released by cghG as substrate and catalyzes the Diels-Alder cycloaddition to form the decalin ring of Sch210972. CghA also suppresses the nonenzymatic formation of the alternative stereoisomer. The chain is Sch210972 biosynthesis cluster protein E from Chaetomium globosum (strain ATCC 6205 / CBS 148.51 / DSM 1962 / NBRC 6347 / NRRL 1970) (Soil fungus).